A 332-amino-acid chain; its full sequence is Ribosomal RNA small subunit methyltransferase C (332 aa).

This sequence belongs to the methyltransferase superfamily. RsmC family. In terms of assembly, monomer.

It localises to the cytoplasm. It carries out the reaction guanosine(1207) in 16S rRNA + S-adenosyl-L-methionine = N(2)-methylguanosine(1207) in 16S rRNA + S-adenosyl-L-homocysteine + H(+). Functionally, specifically methylates the guanine in position 1207 of 16S rRNA in the 30S particle. This Pseudomonas putida (strain GB-1) protein is Ribosomal RNA small subunit methyltransferase C.